Here is a 917-residue protein sequence, read N- to C-terminus: Probable dipeptidyl-aminopeptidase B (917 aa).

Residues 1 to 78 (MGVEKRINDE…EGDLEEGFVP (78 aa)) form a disordered region. Residues 1–90 (MGVEKRINDE…GGWSAPRKVS (90 aa)) are Cytoplasmic-facing. The span at 16–26 (AERDDKSRDSI) shows a compositional bias: basic and acidic residues. The span at 27-49 (DSTSTASISLALLGGANGSAHGS) shows a compositional bias: low complexity. The span at 55–65 (RKSENQEKYHD) shows a compositional bias: basic and acidic residues. Residues 91–111 (VIFTLIVTLCIAGWLVAFFVL) form a helical; Signal-anchor for type II membrane protein membrane-spanning segment. Over 112–917 (LGRHKDSSKD…LGLINILRNG (806 aa)) the chain is Vacuolar. N350 and N465 each carry an N-linked (GlcNAc...) asparagine glycan. S754 functions as the Charge relay system in the catalytic mechanism. N-linked (GlcNAc...) asparagine glycosylation is present at N813. Active-site charge relay system residues include D831 and H864.

Belongs to the peptidase S9B family.

It is found in the vacuole membrane. The catalysed reaction is Release of an N-terminal dipeptide, Xaa-Yaa-|-Zaa-, from a polypeptide, preferentially when Yaa is Pro, provided Zaa is neither Pro nor hydroxyproline.. Functionally, type IV dipeptidyl-peptidase which removes N-terminal dipeptides sequentially from polypeptides having unsubstituted N-termini provided that the penultimate residue is proline. This is Probable dipeptidyl-aminopeptidase B (DAPB) from Coccidioides posadasii (strain C735) (Valley fever fungus).